The chain runs to 462 residues: Argininosuccinate lyase (462 aa).

The protein belongs to the lyase 1 family. Argininosuccinate lyase subfamily.

The protein resides in the cytoplasm. The catalysed reaction is 2-(N(omega)-L-arginino)succinate = fumarate + L-arginine. It participates in amino-acid biosynthesis; L-arginine biosynthesis; L-arginine from L-ornithine and carbamoyl phosphate: step 3/3. The chain is Argininosuccinate lyase from Leuconostoc citreum (strain KM20).